A 417-amino-acid chain; its full sequence is Serpin H1 (417 aa).

The first 18 residues, Met-1–Ala-18, serve as a signal peptide directing secretion. Lys-94 is modified (N6-succinyllysine). Residues Asn-120 and Asn-125 are each glycosylated (N-linked (GlcNAc...) asparagine). At Ser-141 the chain carries Phosphoserine. Lys-206 is subject to N6-acetyllysine. Lys-295 carries the post-translational modification N6-succinyllysine. Lys-318 is modified (N6-acetyllysine). The short motif at Arg-414 to Leu-417 is the Prevents secretion from ER element.

It belongs to the serpin family.

It is found in the endoplasmic reticulum lumen. Its function is as follows. Binds specifically to collagen. Could be involved as a chaperone in the biosynthetic pathway of collagen. This chain is Serpin H1 (SERPINH1), found in Pongo abelii (Sumatran orangutan).